A 377-amino-acid chain; its full sequence is 4-hydroxy-3-methylbut-2-en-1-yl diphosphate synthase (flavodoxin) (377 aa).

Residues C275, C278, C310, and E317 each coordinate [4Fe-4S] cluster.

Belongs to the IspG family. [4Fe-4S] cluster serves as cofactor.

It catalyses the reaction (2E)-4-hydroxy-3-methylbut-2-enyl diphosphate + oxidized [flavodoxin] + H2O + 2 H(+) = 2-C-methyl-D-erythritol 2,4-cyclic diphosphate + reduced [flavodoxin]. It participates in isoprenoid biosynthesis; isopentenyl diphosphate biosynthesis via DXP pathway; isopentenyl diphosphate from 1-deoxy-D-xylulose 5-phosphate: step 5/6. Its function is as follows. Converts 2C-methyl-D-erythritol 2,4-cyclodiphosphate (ME-2,4cPP) into 1-hydroxy-2-methyl-2-(E)-butenyl 4-diphosphate. The polypeptide is 4-hydroxy-3-methylbut-2-en-1-yl diphosphate synthase (flavodoxin) (Jannaschia sp. (strain CCS1)).